Consider the following 780-residue polypeptide: Semaphorin-3G (780 aa).

The signal sequence occupies residues 1-22; the sequence is MDPSAWAICCLLGSLLFHVGIP. Residues 32–519 enclose the Sema domain; it reads RLRLSYRDLL…SPLGVARLQL (488 aa). An N-linked (GlcNAc...) asparagine glycan is attached at N44. Cysteines 105 and 116 form a disulfide. N127 carries an N-linked (GlcNAc...) asparagine glycan. 5 disulfide bridges follow: C134–C143, C270–C382, C294–C342, C522–C540, and C603–C655. In terms of domain architecture, Ig-like C2-type spans 569–671; sequence PAVQCLGQGQ…FSQTVVRFAL (103 aa). N652 carries N-linked (GlcNAc...) asparagine glycosylation.

Belongs to the semaphorin family. In terms of tissue distribution, highly expressed in lung and kidney. Weakly expressed in brain.

The protein localises to the secreted. Its function is as follows. Has chemorepulsive activities for sympathetic axons. Ligand of NRP2. This chain is Semaphorin-3G (Sema3g), found in Mus musculus (Mouse).